The sequence spans 376 residues: Cobalt-precorrin-5B C(1)-methyltransferase (376 aa).

The disordered stretch occupies residues 353-376 (KGRTTSTPSHQPAPSSFGDRNRRT). Residues 355–366 (RTTSTPSHQPAP) are compositionally biased toward polar residues.

The protein belongs to the CbiD family.

It catalyses the reaction Co-precorrin-5B + S-adenosyl-L-methionine = Co-precorrin-6A + S-adenosyl-L-homocysteine. The protein operates within cofactor biosynthesis; adenosylcobalamin biosynthesis; cob(II)yrinate a,c-diamide from sirohydrochlorin (anaerobic route): step 6/10. Catalyzes the methylation of C-1 in cobalt-precorrin-5B to form cobalt-precorrin-6A. The protein is Cobalt-precorrin-5B C(1)-methyltransferase of Agrobacterium fabrum (strain C58 / ATCC 33970) (Agrobacterium tumefaciens (strain C58)).